The primary structure comprises 549 residues: Glucose-6-phosphate isomerase (549 aa).

Catalysis depends on Glu355, which acts as the Proton donor. Active-site residues include His386 and Lys514.

Belongs to the GPI family.

The protein localises to the cytoplasm. It carries out the reaction alpha-D-glucose 6-phosphate = beta-D-fructose 6-phosphate. The protein operates within carbohydrate biosynthesis; gluconeogenesis. Its pathway is carbohydrate degradation; glycolysis; D-glyceraldehyde 3-phosphate and glycerone phosphate from D-glucose: step 2/4. Functionally, catalyzes the reversible isomerization of glucose-6-phosphate to fructose-6-phosphate. This Klebsiella pneumoniae subsp. pneumoniae (strain ATCC 700721 / MGH 78578) protein is Glucose-6-phosphate isomerase.